A 229-amino-acid chain; its full sequence is Transmembrane emp24 domain-containing protein 5 (229 aa).

A signal peptide spans 1–27 (MGDKIWLPFPVLLLAALPPVLLPGAAG). Over 28–196 (FTPSLDSDFT…IQESNFDRVN (169 aa)) the chain is Lumenal. The 82-residue stretch at 45 to 126 (RECFYQPMPL…EKVIFFELIL (82 aa)) folds into the GOLD domain. A helical membrane pass occupies residues 197-217 (FWSMVNLVVMVVVSAIQVYML). Over 218–229 (KSLFEDKRKSRT) the chain is Cytoplasmic.

Belongs to the EMP24/GP25L family. As to quaternary structure, interacts with TMED9 and TMED10.

The protein resides in the endoplasmic reticulum membrane. The protein localises to the golgi apparatus. It localises to the cis-Golgi network membrane. Its subcellular location is the endoplasmic reticulum-Golgi intermediate compartment membrane. Its function is as follows. Potential role in vesicular protein trafficking, mainly in the early secretory pathway. Required for the maintenance of the Golgi apparatus; involved in protein exchange between Golgi stacks during assembly. Probably not required for COPI-vesicle-mediated retrograde transport. In Pongo abelii (Sumatran orangutan), this protein is Transmembrane emp24 domain-containing protein 5 (TMED5).